Here is a 607-residue protein sequence, read N- to C-terminus: Bifunctional endo-1,4-beta-xylanase A (607 aa).

The first 18 residues, 1–18, serve as a signal peptide directing secretion; the sequence is MRTIKFFFAVAIATVAKA. One can recognise a GH11 1 domain in the interval 35-242; it reads NGQTQHKGVA…SSGIADVTKL (208 aa). The active-site Nucleophile is the E141. E223 (proton donor) is an active-site residue. Residues 248–272 show a composition bias toward polar residues; that stretch reads QKGSNPAPTSTGTVPSSSAGGSTAN. Residues 248 to 284 are disordered; sequence QKGSNPAPTSTGTVPSSSAGGSTANGKKFTVGNGQNQ. The GH11 2 domain occupies 280 to 487; that stretch reads NGQNQHKGVN…SSGVADVTLL (208 aa). E386 acts as the Nucleophile in catalysis. The active-site Proton donor is the E474. Residues 493-514 are disordered; that stretch reads PKGSSPATSAAPRTTTRTTTRT. The segment covering 496–514 has biased composition (low complexity); sequence SSPATSAAPRTTTRTTTRT. 2 consecutive CBM10 domains span residues 523 to 563 and 566 to 606; these read KCSA…CGCG and QCSS…CGCG.

It belongs to the glycosyl hydrolase 11 (cellulase G) family.

It carries out the reaction Endohydrolysis of (1-&gt;4)-beta-D-xylosidic linkages in xylans.. It participates in glycan degradation; xylan degradation. In terms of biological role, hydrolyzes xylans into xylobiose and xylose. This chain is Bifunctional endo-1,4-beta-xylanase A (XYNA), found in Neocallimastix patriciarum (Rumen fungus).